Reading from the N-terminus, the 125-residue chain is Acidic phospholipase A2 HTe (125 aa).

7 disulfide bridges follow: Cys-11–Cys-77, Cys-27–Cys-124, Cys-29–Cys-45, Cys-44–Cys-105, Cys-51–Cys-98, Cys-61–Cys-91, and Cys-84–Cys-96. Ca(2+) contacts are provided by Tyr-28, Gly-30, and Gly-32. His-48 is a catalytic residue. Ca(2+) is bound at residue Asp-49. Asp-99 is an active-site residue.

Belongs to the phospholipase A2 family. Group I subfamily. D49 sub-subfamily. Ca(2+) is required as a cofactor. No glycosylation was detected on this protein. As to expression, expressed by the venom gland.

The protein resides in the secreted. The enzyme catalyses a 1,2-diacyl-sn-glycero-3-phosphocholine + H2O = a 1-acyl-sn-glycero-3-phosphocholine + a fatty acid + H(+). Functionally, snake venom phospholipase A2 (PLA2) that blocks neuromuscular transmission, but that does not produce blockade by virtue of a selective action on nerve endings. Instead, the toxin acts both on nerve and on muscle. PLA2 catalyzes the calcium-dependent hydrolysis of the 2-acyl groups in 3-sn-phosphoglycerides. This Notechis scutatus scutatus (Mainland tiger snake) protein is Acidic phospholipase A2 HTe.